We begin with the raw amino-acid sequence, 99 residues long: MNPIIEYLTGMNVLTDQIIAMDLLISAKNGVRNYAMAATEAGTPEVKEVLIRHLEEALDMHEQLSSYMMEKGWYHPWNPDEQVKLNLKNIDTAIQLPTL.

The protein belongs to the CotF family.

It is found in the spore coat. The polypeptide is Spore coat protein F-like protein YraD (yraD) (Bacillus subtilis (strain 168)).